A 298-amino-acid polypeptide reads, in one-letter code: MNKTWKKAATVLAFAGIALSATACSGGKAVVTYKGGKITESQYYDKMKESQAGQSTLASMIVSDALESQYGKDVTQKQVDKEYNKYKKQYGSQFDSVLEQNGMTASTFKDNLKTNLLTEAALKHIKKITPAQEKKAWKNYQPEVTVQHILVSKKSTAEDVIKQLQDGGDFKKLAKKYSTDTATKNDAGKLPAFDSTDSTLDSSFKTAAFKLKTGEITTTPVKTQYGYHVIKMIKHPAKGTFKEHKKQIDNQIYQSMSEDQNVMRSVIATVLKRADVSIKDKDLKNVLSQYVSSDSLSK.

Positions 1–23 (MNKTWKKAATVLAFAGIALSATA) are cleaved as a signal peptide. C24 is lipidated: N-palmitoyl cysteine. Residue C24 is the site of S-diacylglycerol cysteine attachment. The 94-residue stretch at 141–234 (QPEVTVQHIL…YGYHVIKMIK (94 aa)) folds into the PpiC domain.

The protein belongs to the PrsA family.

The protein resides in the cell membrane. It catalyses the reaction [protein]-peptidylproline (omega=180) = [protein]-peptidylproline (omega=0). Plays a major role in protein secretion by helping the post-translocational extracellular folding of several secreted proteins. This is Foldase protein PrsA 1 (prsA1) from Lactobacillus johnsonii (strain CNCM I-12250 / La1 / NCC 533).